The chain runs to 61 residues: Japonicin-1CDYa (61 aa).

An N-terminal signal peptide occupies residues 1-22 (MFTLKKSLLLLFFLGVINVSLC). A propeptide spanning residues 23 to 45 (EEERDADEEERRDDPEERDVEVE) is cleaved from the precursor. An intrachain disulfide couples C55 to C61.

Belongs to the frog skin active peptide (FSAP) family. Brevinin subfamily. Expressed by the skin glands.

The protein resides in the secreted. Functionally, antimicrobial peptide. Has low activity against the Gram-positive bacterium S.aureus (MIC&gt;100 uM) and the Gram-negative bacterium E.coli (MIC=25 uM). Lacks hemolytic activity against human erythrocytes. This chain is Japonicin-1CDYa, found in Rana dybowskii (Dybovsky's frog).